The following is a 42-amino-acid chain: Perlinhibin-related protein (42 aa).

In terms of processing, contains four disulfide bonds.

Its function is as follows. Inhibitor of shell growth. The polypeptide is Perlinhibin-related protein (Haliotis laevigata (Smooth Australian abalone)).